The sequence spans 499 residues: Fumarate hydratase 2 (499 aa).

Positions 19–51 are disordered; the sequence is ADVTLKQEDEQQERRSYSTPFREERDTFGPIQV. A compositionally biased stretch (basic and acidic residues) spans 23–45; it reads LKQEDEQQERRSYSTPFREERDT. Residues 134 to 136, 164 to 167, 174 to 176, and Thr222 each bind substrate; these read SGT, HPND, and SSN. Residue His223 is the Proton donor/acceptor of the active site. Residue Ser353 is part of the active site. Substrate contacts are provided by residues Ser354 and 359–361; that span reads KVN.

Belongs to the class-II fumarase/aspartase family. Fumarase subfamily. In terms of assembly, homotetramer.

The protein resides in the cytoplasm. It is found in the cytosol. It catalyses the reaction (S)-malate = fumarate + H2O. Fumarate hydratase activity (fumarate to L-malate) is strongly inhibited by phosphoenolpyruvate, citrate, oxaloacetate, ATP and ADP. Malate dehydratase activity (malate to fumarate) is activated by oxaloacetate, Asn and Gln. Malate dehydratase activity (malate to fumarate) is inhibited by citrate, succinate, ADP and ATP. Cytosolic fumarate hydratase that catalyzes the reversible stereospecific interconversion of fumarate to L-malate. Catalyzes the dehydration of L-malate to fumarate in the cytosol: required for the massive fumarate accumulation during the day in plants grown under high nitrogen. Also required for acclimation of photosynthesis to cold: acts by mediating accumulation of fumarate at low temperature, leading to reduce accumulation of phosphorylated sugars. This is Fumarate hydratase 2 from Arabidopsis thaliana (Mouse-ear cress).